Consider the following 312-residue polypeptide: Pre-mRNA-splicing factor 38A (312 aa).

Residues 1-179 (MANRTVKDAH…VLEETEQLDP (179 aa)) form an N-terminal protein interaction domain region. Residues 180–312 (RVSALEEDMD…SHKKSRRGNE (133 aa)) form a disordered region. Over residues 184–201 (LEEDMDDVESSEEEEDED) the composition is skewed to acidic residues. Residues 202–223 (EKGRDPSPEHHRRNYRDLDRPR) show a composition bias toward basic and acidic residues. 2 stretches are compositionally biased toward basic residues: residues 224–294 (RSPS…RSHS) and 301–312 (KKSHKKSRRGNE).

It belongs to the PRP38 family. Component of the spliceosome B complex.

The protein localises to the nucleus. Involved in pre-mRNA splicing as a component of the spliceosome. The polypeptide is Pre-mRNA-splicing factor 38A (prpf38a) (Xenopus tropicalis (Western clawed frog)).